The following is a 189-amino-acid chain: Thymidylate kinase (189 aa).

Residue 7–14 (GIDTAGKS) coordinates ATP.

It belongs to the thymidylate kinase family.

It catalyses the reaction dTMP + ATP = dTDP + ADP. Functionally, phosphorylation of dTMP to form dTDP in both de novo and salvage pathways of dTTP synthesis. This chain is Thymidylate kinase, found in Aliarcobacter butzleri (strain RM4018) (Arcobacter butzleri).